Reading from the N-terminus, the 279-residue chain is NAD kinase (279 aa).

Asp-57 (proton acceptor) is an active-site residue. Residues 57–58 (DG), 133–134 (NE), Arg-159, Asp-161, and 172–177 (TAYNKS) each bind NAD(+).

This sequence belongs to the NAD kinase family. It depends on a divalent metal cation as a cofactor.

The protein localises to the cytoplasm. It carries out the reaction NAD(+) + ATP = ADP + NADP(+) + H(+). In terms of biological role, involved in the regulation of the intracellular balance of NAD and NADP, and is a key enzyme in the biosynthesis of NADP. Catalyzes specifically the phosphorylation on 2'-hydroxyl of the adenosine moiety of NAD to yield NADP. This Streptococcus pyogenes serotype M28 (strain MGAS6180) protein is NAD kinase.